Reading from the N-terminus, the 270-residue chain is F-actin-capping protein subunit beta (270 aa).

It belongs to the F-actin-capping protein beta subunit family. In terms of assembly, component of the F-actin capping complex, composed of a heterodimer of an alpha and a beta subunit.

The protein localises to the cytoplasm. The protein resides in the cytoskeleton. In terms of biological role, F-actin-capping proteins bind in a Ca(2+)-independent manner to the fast growing ends of actin filaments (barbed end) thereby blocking the exchange of subunits at these ends. Unlike other capping proteins (such as gelsolin and severin), these proteins do not sever actin filaments. The chain is F-actin-capping protein subunit beta (cap-2) from Caenorhabditis elegans.